We begin with the raw amino-acid sequence, 114 residues long: T cell receptor beta variable 4-2 (114 aa).

An N-terminal signal peptide occupies residues 1–21 (MGCRLLCCAVLCLLGAVPMET). An Ig-like domain is found at 22 to 114 (GVTQTPRHLV…SALYLCASSQ (93 aa)). The cysteines at positions 42 and 110 are disulfide-linked. N76 and N89 each carry an N-linked (GlcNAc...) asparagine glycan.

In terms of assembly, alpha-beta TR is a heterodimer composed of an alpha and beta chain; disulfide-linked. The alpha-beta TR is associated with the transmembrane signaling CD3 coreceptor proteins to form the TR-CD3 (TcR or TCR). The assembly of alpha-beta TR heterodimers with CD3 occurs in the endoplasmic reticulum where a single alpha-beta TR heterodimer associates with one CD3D-CD3E heterodimer, one CD3G-CD3E heterodimer and one CD247 homodimer forming a stable octameric structure. CD3D-CD3E and CD3G-CD3E heterodimers preferentially associate with TR alpha and TR beta chains, respectively. The association of the CD247 homodimer is the last step of TcR assembly in the endoplasmic reticulum and is required for transport to the cell surface.

It is found in the cell membrane. V region of the variable domain of T cell receptor (TR) beta chain that participates in the antigen recognition. Alpha-beta T cell receptors are antigen specific receptors which are essential to the immune response and are present on the cell surface of T lymphocytes. Recognize peptide-major histocompatibility (MH) (pMH) complexes that are displayed by antigen presenting cells (APC), a prerequisite for efficient T cell adaptive immunity against pathogens. Binding of alpha-beta TR to pMH complex initiates TR-CD3 clustering on the cell surface and intracellular activation of LCK that phosphorylates the ITAM motifs of CD3G, CD3D, CD3E and CD247 enabling the recruitment of ZAP70. In turn ZAP70 phosphorylates LAT, which recruits numerous signaling molecules to form the LAT signalosome. The LAT signalosome propagates signal branching to three major signaling pathways, the calcium, the mitogen-activated protein kinase (MAPK) kinase and the nuclear factor NF-kappa-B (NF-kB) pathways, leading to the mobilization of transcription factors that are critical for gene expression and essential for T cell growth and differentiation. The T cell repertoire is generated in the thymus, by V-(D)-J rearrangement. This repertoire is then shaped by intrathymic selection events to generate a peripheral T cell pool of self-MH restricted, non-autoaggressive T cells. Post-thymic interaction of alpha-beta TR with the pMH complexes shapes TR structural and functional avidity. The polypeptide is T cell receptor beta variable 4-2 (Homo sapiens (Human)).